Reading from the N-terminus, the 1384-residue chain is DNA-directed RNA polymerase subunit beta (1384 aa).

Belongs to the RNA polymerase beta chain family. As to quaternary structure, the RNAP catalytic core consists of 2 alpha, 1 beta, 1 beta' and 1 omega subunit. When a sigma factor is associated with the core the holoenzyme is formed, which can initiate transcription.

The enzyme catalyses RNA(n) + a ribonucleoside 5'-triphosphate = RNA(n+1) + diphosphate. Functionally, DNA-dependent RNA polymerase catalyzes the transcription of DNA into RNA using the four ribonucleoside triphosphates as substrates. This Xylella fastidiosa (strain M23) protein is DNA-directed RNA polymerase subunit beta.